We begin with the raw amino-acid sequence, 129 residues long: N16.5 matrix protein (129 aa).

An N-terminal signal peptide occupies residues 1–23; that stretch reads MTCTLRWTITALVLLGICHLARP. Repeat copies occupy residues 91–92, 93–94, 95–96, 97–98, and 99–100. A 5 X 2 AA tandem repeats of N-G region spans residues 91–100; that stretch reads NGNGNGNGNG.

Belongs to the N16 matrix protein family. Heterooligomer; disulfide-linked. Pif97, Pif80, N16 and other proteins form a complex. As to expression, component of conchiolin, the organic matrix of nacre. Specifically expressed in mantle epithelium.

Its subcellular location is the secreted. The protein localises to the extracellular space. It localises to the extracellular matrix. In terms of biological role, may be specifically involved in the formation of the nacreous layer. The polypeptide is N16.5 matrix protein (Pinctada fucata (Akoya pearl oyster)).